Reading from the N-terminus, the 389-residue chain is Tyrosinase-like protein phomQ1 (389 aa).

A helical transmembrane segment spans residues 53–73 (TIIVVSVITFAAIIGCWVFLS). Cu cation-binding residues include H141 and H150. The N-linked (GlcNAc...) asparagine glycan is linked to N220. H290 and H316 together coordinate Cu cation.

It belongs to the tyrosinase family. Cu(2+) is required as a cofactor.

It is found in the membrane. It participates in mycotoxin biosynthesis. Its function is as follows. Tyrosinase-like protein; part of the gene cluster that mediates the biosynthesis of the phomopsins, a group of hexapeptide mycotoxins which infects lupins and causes lupinosis disease in livestock. Within the pathway, phomQ1 functions as a halogenase, converting. The pathway starts with the processing of the precursor phomA by several endopeptidases including kexin proteases as well as the cluster-specific S41 family peptidase phomP1 and the oligopeptidase phomG to produce 10 identical copies of the hexapeptide Tyr-Val-Ile-Pro-Ile-Asp. After being excised from the precursor peptide, the core peptides are cyclized and modified post-translationally by enzymes encoded within the gene cluster. The timing and order of proteolysis of the phomA precursor and PTMs are still unknown. Two tyrosinase-like enzymes, phomQ1 and phomQ2, catalyze the chlorination and hydroxylation of Tyr, respectively. PhomYb, is proposed to be involved in the construction of the macrocyclic structure. The other 4 ustYa family proteins may be involved in PTMs that generate the unique structure of phomopsin A. PhomYa is required for the hydroxylation of C-beta of Tyr. PhomYc, phomYd, and phomYe are responsible for the biosynthesis of 2,3-dehydroisoleucine (dIle), 2,3-dehydroaspartic acid (dAsp), and 3,4-dehydroproline (dPro), respectively. While dIle formation by phomYc is indispensable for the installation of dAsp by phomYd, the order of the other PTMs have not been elucidated yet. Most of the biosynthetic enzymes likely have broad substrate specificity, and thus, there might be a metabolic grid from a precursor to phomopsin A. The enzyme(s) responsible for the biosynthesis of 3,4-dehydrovaline (dVal) have also not been identified yet. Finally, phomM acts as an S-adenosylmethionine-dependent alpha-N-methyltransferase that catalyzes two successive N-methylation reactions, converting N-desmethyl-phomopsin A to phomopsin A and phomopsin A further to an N,N-dimethylated congener called phomopsin E. The polypeptide is Tyrosinase-like protein phomQ1 (Diaporthe leptostromiformis (Lupinosis disease fungus)).